We begin with the raw amino-acid sequence, 196 residues long: Small nuclear ribonucleoprotein-associated protein B (196 aa).

One can recognise a Sm domain in the interval 7–101 (AHSSRLANLI…ILSTVVEDKP (95 aa)). Positions 105 to 132 (KKERLVRDKKEKKQAQKQTKLRKEKEKK) match the Nuclear localization signal motif. A compositionally biased stretch (basic and acidic residues) spans 108 to 118 (RLVRDKKEKKQ). The interval 108-196 (RLVRDKKEKK…FQPPPGFKRK (89 aa)) is disordered. The span at 140–181 (NTANAKHTSSNSREIAQPSSSRYNGGNDNIGANRSRFNNEAP) shows a compositional bias: polar residues.

It belongs to the snRNP SmB/SmN family. As to quaternary structure, component of the Sm core complex, present in spliceosomal snRNP U1, U2, U4/U6 and U5. The core complex contains SMB1, SMD1, SMD2, SMD3, SME1, SMX3 and SMX2 (Sm proteins B, D1, D2, D3, E, F and G, respectively), and is probably a heptameric ring structure. SMB1 specifically interacts with SMD3. Belongs to the CWC complex (or CEF1-associated complex), a spliceosome sub-complex reminiscent of a late-stage spliceosome composed of the U2, U5 and U6 snRNAs and at least BUD13, BUD31, BRR2, CDC40, CEF1, CLF1, CUS1, CWC2, CWC15, CWC21, CWC22, CWC23, CWC24, CWC25, CWC27, ECM2, HSH155, IST3, ISY1, LEA1, MSL1, NTC20, PRP8, PRP9, PRP11, PRP19, PRP21, PRP22, PRP45, PRP46, SLU7, SMB1, SMD1, SMD2, SMD3, SMX2, SMX3, SNT309, SNU114, SPP2, SYF1, SYF2, RSE1 and YJU2. Component of the U4/U6-U5 tri-snRNP complex composed of the U4, U6 and U5 snRNAs and at least PRP3, PRP4, PRP6, PRP8, PRP18, PRP38, SNU13, SNU23, SNU66, SNU114, SPP381, SMB1, SMD1, SMD2, SMD3, SMX2, SMX3, LSM2, LSM3, LSM4, LSM5, LSM6, LSM7, LSM8, BRR2 and DIB1. Interacts with the trimethylguanosine synthase TGS1.

It is found in the nucleus. Its subcellular location is the cytoplasm. Plays a role in pre-mRNA splicing as a core component of the spliceosomal U1, U2, U4 and U5 small nuclear ribonucleoproteins (snRNPs), the building blocks of the spliceosome. The sequence is that of Small nuclear ribonucleoprotein-associated protein B (SMB1) from Saccharomyces cerevisiae (strain ATCC 204508 / S288c) (Baker's yeast).